Consider the following 309-residue polypeptide: Transcription initiation factor IIB 1 (309 aa).

2 repeat units span residues Asn-125–Leu-208 and Asp-219–Gln-300.

Belongs to the TFIIB family.

Its function is as follows. Stabilizes TBP binding to an archaeal box-A promoter. Also responsible for recruiting RNA polymerase II to the pre-initiation complex (DNA-TBP-TFIIB). This Saccharolobus solfataricus (strain ATCC 35092 / DSM 1617 / JCM 11322 / P2) (Sulfolobus solfataricus) protein is Transcription initiation factor IIB 1.